Reading from the N-terminus, the 384-residue chain is Glycerol 3-phosphate oxidase (384 aa).

The first 15 residues, 1 to 15 (METRDVLIVGGGVIG), serve as a signal peptide directing secretion. Residue I14 coordinates FAD. C16 carries N-palmitoyl cysteine lipidation. C16 carries S-diacylglycerol cysteine lipidation. Residues E33, 42 to 43 (TS), and 47 to 49 (SGV) each bind FAD. Residues S47 and H51 each coordinate sn-glycerol 3-phosphate. H51 acts as the Proton acceptor in catalysis. V177 is an FAD binding site. Positions 258 and 320 each coordinate sn-glycerol 3-phosphate. FAD is bound at residue 346–347 (MK). S348 contacts sn-glycerol 3-phosphate. FAD is bound at residue T352.

Monomer. FAD serves as cofactor.

It is found in the cytoplasm. It localises to the cell membrane. The catalysed reaction is sn-glycerol 3-phosphate + O2 = dihydroxyacetone phosphate + H2O2. It participates in polyol metabolism; glycerol degradation via glycerol kinase pathway; glycerone phosphate from sn-glycerol 3-phosphate (aerobic route): step 1/1. Functionally, catalyzes the oxidation of glycerol 3-phosphate to dihydroxyacetone phosphate (DHAP), with a reduction of O2 to H2O2. The formation of hydrogen peroxide by this enzyme is crucial for cytotoxic effects of M.pneumoniae on host cells. Is involved in the metabolism of glycerol and is essential for glycerol utilization; glycerol is one of the few carbon sources that can be utilized by M.pneumoniae for growth. To a lesser extent, is also able to use glyceraldehyde 3-phosphate (GAP), an intermediate in the glycolysis pathway, as a substrate (but the structure of the product has not been elucidated). Therefore, in the absence of glycerol, GAP may serve as a substrate in the GlpO reaction to supply H2O2 during mycoplasma infection. Does not show any dehydrogenase activity with NAD(+). The chain is Glycerol 3-phosphate oxidase from Mycoplasma pneumoniae (strain ATCC 29342 / M129 / Subtype 1) (Mycoplasmoides pneumoniae).